The sequence spans 488 residues: Calcium uniporter protein, mitochondrial (488 aa).

Residues 1–74 (MRALVSRTPI…RSFQLSASSR (74 aa)) constitute a mitochondrion transit peptide. The segment at 65-117 (RSFQLSASSRDKRGPQSAEPDPLERLEVKKVQQQHENEKDDSGRDTKSGGKVA) is disordered. The Mitochondrial matrix portion of the chain corresponds to 75-339 (DKRGPQSAEP…ECDALAHRGA (265 aa)). The span at 86-112 (PLERLEVKKVQQQHENEKDDSGRDTKS) shows a compositional bias: basic and acidic residues. The chain crosses the membrane as a helical span at residues 340–361 (QRVALGGFGILAFWWYIVYKLT). Residues 362–370 (FETDLGWDT) lie on the Mitochondrial intermembrane side of the membrane. A Selectivity filter motif is present at residues 368 to 376 (WDTMEPVTY). The helical transmembrane segment at 371–391 (MEPVTYLVSLSTLMGGYLWFL) threads the bilayer. Glu372 serves as a coordination point for Ca(2+). Over 392-488 (YHNREISYRS…ERPKDDRDDD (97 aa)) the chain is Mitochondrial matrix. The disordered stretch occupies residues 464-488 (ALKKERRLKNGSQKEERPKDDRDDD). Basic and acidic residues predominate over residues 475–488 (SQKEERPKDDRDDD).

It belongs to the MCU (TC 1.A.77) family. As to quaternary structure, homotetramer, assembles in a dimer or dimers configuration with two interfaces.

It localises to the mitochondrion inner membrane. The enzyme catalyses Ca(2+)(in) = Ca(2+)(out). Its activity is regulated as follows. Inhibited by ruthenium red or its derivative Ru360. In terms of biological role, highly selective calcium channel localized to the inner mitochondrial membrane, which mediates calcium uptake into the mitochondrial matrix. Mitochondrial calcium homeostasis plays key roles in cellular physiology and regulates ATP production, cytoplasmic calcium signals and activation of cell death pathways. Sufficient to operate as a pore-forming channel without the need of calcium-sensor or auxiliary subunit. This Neosartorya fischeri (strain ATCC 1020 / DSM 3700 / CBS 544.65 / FGSC A1164 / JCM 1740 / NRRL 181 / WB 181) (Aspergillus fischerianus) protein is Calcium uniporter protein, mitochondrial.